The chain runs to 457 residues: Argininosuccinate lyase (457 aa).

The protein belongs to the lyase 1 family. Argininosuccinate lyase subfamily.

Its subcellular location is the cytoplasm. It carries out the reaction 2-(N(omega)-L-arginino)succinate = fumarate + L-arginine. The protein operates within amino-acid biosynthesis; L-arginine biosynthesis; L-arginine from L-ornithine and carbamoyl phosphate: step 3/3. This Pasteurella multocida (strain Pm70) protein is Argininosuccinate lyase.